A 183-amino-acid polypeptide reads, in one-letter code: Inner membrane-spanning protein YciB (183 aa).

The next 5 helical transmembrane spans lie at 4–24, 50–70, 72–92, 119–139, and 149–169; these read FIEF…DIYM, MQLF…FFHD, TFIK…LLIS, VNLG…YVAF, and FKVF…GVYL.

It belongs to the YciB family.

It localises to the cell inner membrane. In terms of biological role, plays a role in cell envelope biogenesis, maintenance of cell envelope integrity and membrane homeostasis. This is Inner membrane-spanning protein YciB from Aeromonas hydrophila subsp. hydrophila (strain ATCC 7966 / DSM 30187 / BCRC 13018 / CCUG 14551 / JCM 1027 / KCTC 2358 / NCIMB 9240 / NCTC 8049).